Consider the following 146-residue polypeptide: MKRLLILTALLPFVGFAQPINTLNNPNQPGYQIPSQQRMQTQMQTQQIQQKGMLNQQLKTQTQLQQQHLENQINNNSQRVLQSQPGERNPARQQMLPNTNGGMLNSNRNPDSSLNQQHMLPERRNGDMLNQPSTPQPDIPLKTIGP.

The first 17 residues, 1–17 (MKRLLILTALLPFVGFA), serve as a signal peptide directing secretion. 2 disordered regions span residues 27 to 54 (NQPG…KGML) and 70 to 146 (ENQI…TIGP). Positions 32 to 54 (QIPSQQRMQTQMQTQQIQQKGML) are enriched in low complexity. Residues 77–118 (SQRVLQSQPGERNPARQQMLPNTNGGMLNSNRNPDSSLNQQH) are compositionally biased toward polar residues.

This is an uncharacterized protein from Escherichia coli (strain K12).